Here is a 938-residue protein sequence, read N- to C-terminus: Nitrate reductase (938 aa).

In terms of domain architecture, 4Fe-4S Mo/W bis-MGD-type spans 1 to 64 (MSVVQSSCAY…RLLDSLAQPN (64 aa)). The [4Fe-4S] cluster site is built by Cys8, Cys11, Cys15, and Cys50.

It belongs to the prokaryotic molybdopterin-containing oxidoreductase family. NasA/NapA/NarB subfamily. The cofactor is [4Fe-4S] cluster. Mo-bis(molybdopterin guanine dinucleotide) is required as a cofactor.

It localises to the cytoplasm. The enzyme catalyses nitrate + a quinol = a quinone + nitrite + H2O. It functions in the pathway nitrogen metabolism; nitrate reduction (assimilation). Functionally, nitrate reductase is a key enzyme involved in the first step of nitrate assimilation in plants, fungi and bacteria. This chain is Nitrate reductase, found in Shewanella frigidimarina (strain NCIMB 400).